The chain runs to 1009 residues: Type VII secretion system accessory factor EsaA (1009 aa).

A helical membrane pass occupies residues 7 to 27 (IYALIVTLIIIIAIVSMIFFV). The span at 680-697 (TFAEEPQEPKIDKGKNDE) shows a compositional bias: basic and acidic residues. Residues 680 to 707 (TFAEEPQEPKIDKGKNDEFNTMSSNLDK) are disordered. 5 helical membrane-spanning segments follow: residues 822–842 (ISPT…AYIF), 869–889 (VITS…VGLI), 903–923 (KFIL…TYLL), 928–948 (SIGM…MNNL), and 979–999 (IGLV…LNMF).

It belongs to the EsaA family. As to quaternary structure, homodimer. Interacts with EssB.

The protein resides in the cell membrane. Functionally, component of the type VII secretion system (Ess). Provides together with EssB and other components such as EssC and EssE a secretion platform across the cytoplasmic membrane in the host. The chain is Type VII secretion system accessory factor EsaA from Staphylococcus aureus (strain COL).